The following is a 240-amino-acid chain: Putative glycyl-radical enzyme activating enzyme MJ1227 (240 aa).

The Radical SAM core domain maps to 14–232 (IDYPKKASAV…KKYIDNVVIR (219 aa)). [4Fe-4S] cluster-binding residues include cysteine 29, cysteine 33, and cysteine 36. S-adenosyl-L-methionine-binding positions include 35 to 37 (YCH), glycine 71, and 126 to 128 (FDK).

Belongs to the organic radical-activating enzymes family. [4Fe-4S] cluster serves as cofactor.

It catalyses the reaction glycyl-[protein] + reduced [flavodoxin] + S-adenosyl-L-methionine = glycin-2-yl radical-[protein] + semiquinone [flavodoxin] + 5'-deoxyadenosine + L-methionine + H(+). This Methanocaldococcus jannaschii (strain ATCC 43067 / DSM 2661 / JAL-1 / JCM 10045 / NBRC 100440) (Methanococcus jannaschii) protein is Putative glycyl-radical enzyme activating enzyme MJ1227.